The chain runs to 56 residues: Large ribosomal subunit protein bL32 (56 aa).

The protein belongs to the bacterial ribosomal protein bL32 family.

In Brevibacillus brevis (strain 47 / JCM 6285 / NBRC 100599), this protein is Large ribosomal subunit protein bL32.